A 630-amino-acid polypeptide reads, in one-letter code: Protein zwilch homolog (630 aa).

It belongs to the ZWILCH family. In terms of assembly, component of the RZZ complex composed of rod-1, czw-1 and zwl-1. Interacts with the spindly-like protein spdl-1. Interacts with NDC80 complex component ndc-80.

Its subcellular location is the cytoplasm. The protein resides in the cell cortex. It localises to the chromosome. It is found in the centromere. The protein localises to the kinetochore. Its subcellular location is the cytoskeleton. The protein resides in the spindle. Its function is as follows. Essential component of the mitotic checkpoint, which prevents cells from prematurely exiting mitosis. Required for chromosome segregation, the assembly of the dynein-dynactin and mdf-1-mdf-2 complexes onto kinetochores and spindle pole separation. Its function related to the spindle assembly machinery and kinetochore-microtubule attachments likely depends on its association in the mitotic RZZ complex. The RZZ complex recruits the spindly-like protein spdl-1 to kinetochores. To prevent irregular chromosome segregation, the complex also inhibits the attachment of the kinetochore-associated NDC80 complex to microtubules. The recruitment of spdl-1 to kinetochores relieves this inhibition. Required for embryonic development. This Caenorhabditis elegans protein is Protein zwilch homolog (zwl-1).